A 317-amino-acid chain; its full sequence is Lipoyl synthase (317 aa).

Positions 56, 61, 67, 82, 86, 89, and 298 each coordinate [4Fe-4S] cluster. The 220-residue stretch at 68-287 (WEDREATFLI…KEEAEQIGFS (220 aa)) folds into the Radical SAM core domain.

The protein belongs to the radical SAM superfamily. Lipoyl synthase family. It depends on [4Fe-4S] cluster as a cofactor.

It is found in the cytoplasm. The catalysed reaction is [[Fe-S] cluster scaffold protein carrying a second [4Fe-4S](2+) cluster] + N(6)-octanoyl-L-lysyl-[protein] + 2 oxidized [2Fe-2S]-[ferredoxin] + 2 S-adenosyl-L-methionine + 4 H(+) = [[Fe-S] cluster scaffold protein] + N(6)-[(R)-dihydrolipoyl]-L-lysyl-[protein] + 4 Fe(3+) + 2 hydrogen sulfide + 2 5'-deoxyadenosine + 2 L-methionine + 2 reduced [2Fe-2S]-[ferredoxin]. It functions in the pathway protein modification; protein lipoylation via endogenous pathway; protein N(6)-(lipoyl)lysine from octanoyl-[acyl-carrier-protein]: step 2/2. Its function is as follows. Catalyzes the radical-mediated insertion of two sulfur atoms into the C-6 and C-8 positions of the octanoyl moiety bound to the lipoyl domains of lipoate-dependent enzymes, thereby converting the octanoylated domains into lipoylated derivatives. This Streptomyces coelicolor (strain ATCC BAA-471 / A3(2) / M145) protein is Lipoyl synthase.